The chain runs to 353 residues: Photosystem II D2 protein (353 aa).

Thr-2 bears the N-acetylthreonine mark. Thr-2 carries the phosphothreonine modification. The helical transmembrane segment at 41–61 (CAYFALGGWFTGTTFVTSWYT) threads the bilayer. Residue His-118 participates in chlorophyll a binding. A helical membrane pass occupies residues 125-141 (GFMLRQFELARSVQLRP). The pheophytin a site is built by Gln-130 and Asn-143. The helical transmembrane segment at 153-166 (VFVSVFLIYPLGQS) threads the bilayer. His-198 lines the chlorophyll a pocket. A helical membrane pass occupies residues 208–228 (AALLCAIHGATVENTLFEDGD). A plastoquinone is bound by residues His-215 and Phe-262. His-215 contributes to the Fe cation binding site. Residue His-269 participates in Fe cation binding. A helical transmembrane segment spans residues 279-295 (GLWMSALGVVGLALNLR).

Belongs to the reaction center PufL/M/PsbA/D family. PSII is composed of 1 copy each of membrane proteins PsbA, PsbB, PsbC, PsbD, PsbE, PsbF, PsbH, PsbI, PsbJ, PsbK, PsbL, PsbM, PsbT, PsbX, PsbY, PsbZ, Psb30/Ycf12, at least 3 peripheral proteins of the oxygen-evolving complex and a large number of cofactors. It forms dimeric complexes. The D1/D2 heterodimer binds P680, chlorophylls that are the primary electron donor of PSII, and subsequent electron acceptors. It shares a non-heme iron and each subunit binds pheophytin, quinone, additional chlorophylls, carotenoids and lipids. There is also a Cl(-1) ion associated with D1 and D2, which is required for oxygen evolution. The PSII complex binds additional chlorophylls, carotenoids and specific lipids. is required as a cofactor.

The protein localises to the plastid. Its subcellular location is the chloroplast thylakoid membrane. The catalysed reaction is 2 a plastoquinone + 4 hnu + 2 H2O = 2 a plastoquinol + O2. Photosystem II (PSII) is a light-driven water:plastoquinone oxidoreductase that uses light energy to abstract electrons from H(2)O, generating O(2) and a proton gradient subsequently used for ATP formation. It consists of a core antenna complex that captures photons, and an electron transfer chain that converts photonic excitation into a charge separation. The D1/D2 (PsbA/PsbD) reaction center heterodimer binds P680, the primary electron donor of PSII as well as several subsequent electron acceptors. D2 is needed for assembly of a stable PSII complex. The polypeptide is Photosystem II D2 protein (Citrus sinensis (Sweet orange)).